The chain runs to 237 residues: Sugar fermentation stimulation protein homolog (237 aa).

The protein belongs to the SfsA family.

The chain is Sugar fermentation stimulation protein homolog from Pseudomonas putida (strain ATCC 700007 / DSM 6899 / JCM 31910 / BCRC 17059 / LMG 24140 / F1).